The chain runs to 124 residues: Colorectal cancer-associated protein 1 (124 aa).

The chain crosses the membrane as a helical span at residues 77-97; the sequence is LYGCFCVGLVSGMAISVLLLA.

In terms of tissue distribution, expressed in gastrointestinal and immune tissue, as well as prostate, testis and ovary. Expressed in lamina propria and eosinophils but not in epithelial cells. Expression is greater in benign adjacent tissues than in colon tumors.

Its subcellular location is the membrane. The chain is Colorectal cancer-associated protein 1 (COLCA1) from Homo sapiens (Human).